The chain runs to 476 residues: Angiotensinogen (476 aa).

A signal peptide spans 1–24 (MAPAGVSLRATILCLLAWAGLAAG). Position 25 is a beta-decarboxylated aspartate; in form angiotensin-A (Asp25). N-linked (GlcNAc...) asparagine glycans are attached at residues Asn38, Asn161, Asn295, and Asn319. A disulfide bridge connects residues Cys42 and Cys162.

The protein belongs to the serpin family. In terms of assembly, during pregnancy, exists as a disulfide-linked 2:2 heterotetramer with the proform of PRG2 and as a complex (probably a 2:2:2 heterohexamer) with pro-PRG2 and C3dg. Post-translationally, beta-decarboxylation of Asp-25 in angiotensin-2, by mononuclear leukocytes produces alanine. The resulting peptide form, angiotensin-A, has the same affinity for the AT1 receptor as angiotensin-2, but a higher affinity for the AT2 receptor. In terms of processing, in response to low blood pressure, the enzyme renin/REN cleaves angiotensinogen to produce angiotensin-1. Angiotensin-1 is a substrate of ACE (angiotensin converting enzyme) that removes a dipeptide to yield the physiologically active peptide angiotensin-2. Angiotensin-1 and angiotensin-2 can be further processed to generate angiotensin-3, angiotensin-4. Angiotensin 1-9 is cleaved from angiotensin-1 by ACE2 and can be further processed by ACE to produce angiotensin 1-7, angiotensin 1-5 and angiotensin 1-4. Angiotensin 1-7 has also been proposed to be cleaved from angiotensin-2 by ACE2 or from angiotensin-1 by MME (neprilysin). The disulfide bond is labile. Angiotensinogen is present in the circulation in a near 40:60 ratio with the oxidized disulfide-bonded form, which preferentially interacts with receptor-bound renin. As to expression, expressed by the liver and secreted in plasma.

The protein localises to the secreted. Essential component of the renin-angiotensin system (RAS), a potent regulator of blood pressure, body fluid and electrolyte homeostasis. Its function is as follows. Acts directly on vascular smooth muscle as a potent vasoconstrictor, affects cardiac contractility and heart rate through its action on the sympathetic nervous system, and alters renal sodium and water absorption through its ability to stimulate the zona glomerulosa cells of the adrenal cortex to synthesize and secrete aldosterone. Acts by binding to angiotensin receptors AGTR1 and AGTR2. Also binds the DEAR/FBXW7-AS1 receptor. Functionally, stimulates aldosterone release. In terms of biological role, is a ligand for the G-protein coupled receptor MAS1. Has vasodilator and antidiuretic effects. Has an antithrombotic effect that involves MAS1-mediated release of nitric oxide from platelets. This Homo sapiens (Human) protein is Angiotensinogen.